Here is a 210-residue protein sequence, read N- to C-terminus: N-(5'-phosphoribosyl)anthranilate isomerase (210 aa).

This sequence belongs to the TrpF family.

The enzyme catalyses N-(5-phospho-beta-D-ribosyl)anthranilate = 1-(2-carboxyphenylamino)-1-deoxy-D-ribulose 5-phosphate. It participates in amino-acid biosynthesis; L-tryptophan biosynthesis; L-tryptophan from chorismate: step 3/5. The protein is N-(5'-phosphoribosyl)anthranilate isomerase of Magnetococcus marinus (strain ATCC BAA-1437 / JCM 17883 / MC-1).